Here is a 232-residue protein sequence, read N- to C-terminus: Ubiquinone biosynthesis O-methyltransferase (232 aa).

S-adenosyl-L-methionine-binding residues include arginine 36, glycine 55, aspartate 76, and leucine 120.

The protein belongs to the methyltransferase superfamily. UbiG/COQ3 family.

The catalysed reaction is a 3-demethylubiquinol + S-adenosyl-L-methionine = a ubiquinol + S-adenosyl-L-homocysteine + H(+). The enzyme catalyses a 3-(all-trans-polyprenyl)benzene-1,2-diol + S-adenosyl-L-methionine = a 2-methoxy-6-(all-trans-polyprenyl)phenol + S-adenosyl-L-homocysteine + H(+). Its pathway is cofactor biosynthesis; ubiquinone biosynthesis. Functionally, O-methyltransferase that catalyzes the 2 O-methylation steps in the ubiquinone biosynthetic pathway. In Pseudomonas fluorescens (strain Pf0-1), this protein is Ubiquinone biosynthesis O-methyltransferase.